A 222-amino-acid polypeptide reads, in one-letter code: MVLLSKFDFSGKESGKFELPDAFFTEGKEQSVKDYLVAIQANKRQWSACTRGRSEVSHSTKKPFRQKGTGNARQGCLAAPQFRGGGIVFGPKPKFDQHIRINKKERRAAIRLLLAQKIQTGKLIVAENSVFVSSLDAPKTKEALRFLKECNVECRGVLFVDGLAHVGSNENLRLSVRNLSAVRGFTYGENISGYDIAAARNIVVSEKALELLVESLVSTTKD.

The disordered stretch occupies residues 50–72 (TRGRSEVSHSTKKPFRQKGTGNA).

This sequence belongs to the universal ribosomal protein uL4 family. In terms of assembly, part of the 50S ribosomal subunit.

Its function is as follows. One of the primary rRNA binding proteins, this protein initially binds near the 5'-end of the 23S rRNA. It is important during the early stages of 50S assembly. It makes multiple contacts with different domains of the 23S rRNA in the assembled 50S subunit and ribosome. Forms part of the polypeptide exit tunnel. This Chlamydia trachomatis serovar A (strain ATCC VR-571B / DSM 19440 / HAR-13) protein is Large ribosomal subunit protein uL4.